The primary structure comprises 342 residues: L-threonine 3-dehydrogenase (342 aa).

C38 contributes to the Zn(2+) binding site. Catalysis depends on charge relay system residues T40 and H43. Zn(2+) contacts are provided by H63, E64, C93, C96, C99, and C107. NAD(+) contacts are provided by residues I175, D195, R200, 262–264, and 286–287; these read LGI and IY.

The protein belongs to the zinc-containing alcohol dehydrogenase family. In terms of assembly, homotetramer. Zn(2+) is required as a cofactor.

The protein localises to the cytoplasm. It catalyses the reaction L-threonine + NAD(+) = (2S)-2-amino-3-oxobutanoate + NADH + H(+). It functions in the pathway amino-acid degradation; L-threonine degradation via oxydo-reductase pathway; glycine from L-threonine: step 1/2. Catalyzes the NAD(+)-dependent oxidation of L-threonine to 2-amino-3-ketobutyrate. The sequence is that of L-threonine 3-dehydrogenase from Burkholderia multivorans (strain ATCC 17616 / 249).